The chain runs to 462 residues: Toxin CqTX-A (462 aa).

A signal peptide spans 1-19 (MANMLYFSLLALLFMTGIA). The N-linked (GlcNAc...) asparagine glycan is linked to N174.

Belongs to the jellyfish toxin family. Type I subfamily. In terms of processing, contains disulfide bonds. Post-translationally, N-glycosylated.

It is found in the secreted. The protein resides in the nematocyst. It localises to the target cell membrane. Its function is as follows. Critical allergen and main toxic protein of C.quadrigatus venom. Has potent hemolytic activity. Is lethal to crayfish. Causes cutaneous inflammation in humans. May act as a pore-forming toxin, disrupting normal transmembrane ion concentration gradients in susceptible cells. The protein is Toxin CqTX-A of Chiropsoides quadrigatus (Box jellyfish).